A 471-amino-acid chain; its full sequence is Glutamate--tRNA ligase (471 aa).

A 'HIGH' region motif is present at residues 9–19 (PSPTGYLHVGG). Zn(2+) contacts are provided by Cys-98, Cys-100, Cys-125, and His-127. The 'KMSKS' region signature appears at 237 to 241 (KLSKR). Position 240 (Lys-240) interacts with ATP.

Belongs to the class-I aminoacyl-tRNA synthetase family. Glutamate--tRNA ligase type 1 subfamily. Monomer. It depends on Zn(2+) as a cofactor.

The protein resides in the cytoplasm. It catalyses the reaction tRNA(Glu) + L-glutamate + ATP = L-glutamyl-tRNA(Glu) + AMP + diphosphate. Its function is as follows. Catalyzes the attachment of glutamate to tRNA(Glu) in a two-step reaction: glutamate is first activated by ATP to form Glu-AMP and then transferred to the acceptor end of tRNA(Glu). The sequence is that of Glutamate--tRNA ligase from Escherichia coli (strain ATCC 8739 / DSM 1576 / NBRC 3972 / NCIMB 8545 / WDCM 00012 / Crooks).